The sequence spans 398 residues: Argininosuccinate synthase (398 aa).

9 to 17 (AYSGGLDTS) contacts ATP. Position 85 (tyrosine 85) interacts with L-citrulline. ATP is bound at residue glycine 115. L-aspartate is bound by residues threonine 117, asparagine 121, and aspartate 122. Asparagine 121 is a binding site for L-citrulline. L-citrulline-binding residues include arginine 125, serine 173, glutamate 258, and tyrosine 270.

This sequence belongs to the argininosuccinate synthase family. Type 1 subfamily. As to quaternary structure, homotetramer.

The protein resides in the cytoplasm. It catalyses the reaction L-citrulline + L-aspartate + ATP = 2-(N(omega)-L-arginino)succinate + AMP + diphosphate + H(+). It functions in the pathway amino-acid biosynthesis; L-arginine biosynthesis; L-arginine from L-ornithine and carbamoyl phosphate: step 2/3. The polypeptide is Argininosuccinate synthase (Streptococcus pneumoniae (strain Hungary19A-6)).